The sequence spans 727 residues: NADH-ubiquinone oxidoreductase 75 kDa subunit, mitochondrial (727 aa).

The N-terminal 23 residues, Met1–Thr23, are a transit peptide targeting the mitochondrion. The region spanning Asn30–Lys108 is the 2Fe-2S ferredoxin-type domain. The [2Fe-2S] cluster site is built by Cys64, Cys75, and Cys78. At Lys84 the chain carries N6-acetyllysine. Cys92 serves as a coordination point for [2Fe-2S] cluster. Residues Lys108–Gly147 enclose the 4Fe-4S His(Cys)3-ligated-type domain. [4Fe-4S] cluster contacts are provided by His124, Cys128, Cys131, Cys137, Cys176, Cys179, Cys182, and Cys226. The region spanning Thr245–Arg301 is the 4Fe-4S Mo/W bis-MGD-type domain. N6-acetyllysine is present on residues Lys499 and Lys709.

This sequence belongs to the complex I 75 kDa subunit family. As to quaternary structure, core subunit of respiratory chain NADH dehydrogenase (Complex I) which is composed of 45 different subunits. This is the largest subunit of complex I and it is a component of the iron-sulfur (IP) fragment of the enzyme. Complex I associates with ubiquinol-cytochrome reductase complex (Complex III) to form supercomplexes. Interacts with MDM2 and AKAP1. [2Fe-2S] cluster serves as cofactor. It depends on [4Fe-4S] cluster as a cofactor.

The protein localises to the mitochondrion inner membrane. It carries out the reaction a ubiquinone + NADH + 5 H(+)(in) = a ubiquinol + NAD(+) + 4 H(+)(out). In terms of biological role, core subunit of the mitochondrial membrane respiratory chain NADH dehydrogenase (Complex I) which catalyzes electron transfer from NADH through the respiratory chain, using ubiquinone as an electron acceptor. Essential for catalysing the entry and efficient transfer of electrons within complex I. Plays a key role in the assembly and stability of complex I and participates in the association of complex I with ubiquinol-cytochrome reductase complex (Complex III) to form supercomplexes. The chain is NADH-ubiquinone oxidoreductase 75 kDa subunit, mitochondrial (NDUFS1) from Bos taurus (Bovine).